The primary structure comprises 142 residues: Protein archease (142 aa).

The Ca(2+) site is built by aspartate 12, aspartate 141, and isoleucine 142.

It belongs to the archease family. In terms of assembly, in solution, exists as a monomer, trimer and hexamer. Oligomeric states form a tripartite complex with tRNA and PAB1947 methyltransferase.

Functionally, activates the tRNA-splicing ligase complex by facilitating the enzymatic turnover of catalytic subunit RtcB. Acts by promoting the guanylylation of RtcB, a key intermediate step in tRNA ligation. Can also alter the NTP specificity of RtcB such that ATP, dGTP or ITP is used efficiently. Chaperone or modulator of proteins involved in DNA or RNA processing. Protects the tRNA (cytosine-5-)-methyltransferase PAB1947 against aggregation and increases its specificity. The protein is Protein archease of Pyrococcus abyssi (strain GE5 / Orsay).